The sequence spans 546 residues: Chaperonin GroEL (546 aa).

ATP-binding positions include 29 to 32, lysine 50, 86 to 90, glycine 414, and aspartate 494; these read TLGP and DGTTT. Residues 525 to 546 are disordered; that stretch reads KKESAAPAMPGHDGMGGMGGMM. Positions 537 to 546 are enriched in gly residues; that stretch reads DGMGGMGGMM.

Belongs to the chaperonin (HSP60) family. Forms a cylinder of 14 subunits composed of two heptameric rings stacked back-to-back. Interacts with the co-chaperonin GroES.

Its subcellular location is the cytoplasm. The catalysed reaction is ATP + H2O + a folded polypeptide = ADP + phosphate + an unfolded polypeptide.. Functionally, together with its co-chaperonin GroES, plays an essential role in assisting protein folding. The GroEL-GroES system forms a nano-cage that allows encapsulation of the non-native substrate proteins and provides a physical environment optimized to promote and accelerate protein folding. This chain is Chaperonin GroEL, found in Bdellovibrio bacteriovorus (strain ATCC 15356 / DSM 50701 / NCIMB 9529 / HD100).